Consider the following 107-residue polypeptide: LYAMSPMAARYSAGAPWLYLLADMPRDSQRLVDPADLHEGRARPKRKMPSLSINNPMEVLRQRLILEVARKQMREANQRQAVANRLFLQNVGKRGFWANSAPTRYDN.

Residues 1-44 constitute a propeptide that is removed on maturation; sequence LYAMSPMAARYSAGAPWLYLLADMPRDSQRLVDPADLHEGRARP. Val91 carries the post-translational modification Valine amide.

In terms of tissue distribution, expressed in corpora cardiaca (CC), corpora allata (CA), antennal lobe (AL) and gnathal ganglion (GNG) (at protein level). Expression in AL and GNG detected in some animals, in CC and CA in few animals (at protein level).

Its subcellular location is the secreted. Regulation of fluid secretion. In Agrotis ipsilon (Black cutworm moth), this protein is Diuretic hormone 45.